A 413-amino-acid chain; its full sequence is Divalent metal cation transporter MntH (413 aa).

Residues 1 to 19 are Cytoplasmic-facing; that stretch reads MTDNRVENSSGRAARKLRL. Residues 20–39 form a helical membrane-spanning segment; sequence ALMGPAFIAAIGYIDPGNFA. The Periplasmic portion of the chain corresponds to 40-51; it reads TNIQAGASFGYQ. A helical transmembrane segment spans residues 52 to 71; the sequence is LLWVVVWANLMAMLIQILSA. At 72 to 95 the chain is on the cytoplasmic side; the sequence is KLGIATGKNLAEQIRDHYPRPVVW. The chain crosses the membrane as a helical span at residues 96–118; sequence FYWVQAEIIAMATDLAEFIGAAI. Residues 119 to 125 lie on the Periplasmic side of the membrane; the sequence is GFKLILG. A helical membrane pass occupies residues 126 to 145; sequence VSLLQGAVLTGIATFLILML. The Cytoplasmic segment spans residues 146 to 155; it reads QRRGQKPLEK. Residues 156 to 175 traverse the membrane as a helical segment; the sequence is VIGGLLLFVAAAYIVELFFS. The Periplasmic segment spans residues 176–196; sequence QPDMAQLGKGMVIPALPNPEA. A helical membrane pass occupies residues 197 to 220; the sequence is VFLAAGVLGATIMPHVIYLHSSLT. The Cytoplasmic portion of the chain corresponds to 221–238; it reads QHLHGGTRQQRYSATKWD. A helical transmembrane segment spans residues 239-258; that stretch reads VAIAMTIAGFVNLAMMATAA. Over 259–276 the chain is Periplasmic; it reads AAFHFSGHTGIADLDQAY. Residues 277–297 form a helical membrane-spanning segment; sequence LTLEPLLSHAAATVFGLSLVA. Residues 298–327 lie on the Cytoplasmic side of the membrane; sequence AGLSSTVVGTLAGQVVMQGFVRFHIPLWVR. A helical transmembrane segment spans residues 328 to 344; the sequence is RTITMLPSFIVILMGLD. Topologically, residues 345 to 350 are periplasmic; that stretch reads PTRILV. The chain crosses the membrane as a helical span at residues 351–370; that stretch reads MSQVLLSFGIALALVPLLIF. Residues 371–387 are Cytoplasmic-facing; the sequence is TSNATLMGELVNTRRVK. The chain crosses the membrane as a helical span at residues 388-406; it reads QVGWIIVVLVVALNIWLLV. Residues 407-413 lie on the Periplasmic side of the membrane; the sequence is GTVMGLS.

This sequence belongs to the NRAMP family.

The protein localises to the cell inner membrane. In terms of biological role, h(+)-stimulated, divalent metal cation uptake system. This Salmonella paratyphi C (strain RKS4594) protein is Divalent metal cation transporter MntH.